The sequence spans 366 residues: tRNA/tmRNA (uracil-C(5))-methyltransferase (366 aa).

Gln190, Tyr218, Asn223, Glu239, and Asp299 together coordinate S-adenosyl-L-methionine. Cys324 (nucleophile) is an active-site residue. Glu358 functions as the Proton acceptor in the catalytic mechanism.

This sequence belongs to the class I-like SAM-binding methyltransferase superfamily. RNA M5U methyltransferase family. TrmA subfamily.

It catalyses the reaction uridine(54) in tRNA + S-adenosyl-L-methionine = 5-methyluridine(54) in tRNA + S-adenosyl-L-homocysteine + H(+). The enzyme catalyses uridine(341) in tmRNA + S-adenosyl-L-methionine = 5-methyluridine(341) in tmRNA + S-adenosyl-L-homocysteine + H(+). Dual-specificity methyltransferase that catalyzes the formation of 5-methyluridine at position 54 (m5U54) in all tRNAs, and that of position 341 (m5U341) in tmRNA (transfer-mRNA). The polypeptide is tRNA/tmRNA (uracil-C(5))-methyltransferase (Escherichia coli (strain ATCC 8739 / DSM 1576 / NBRC 3972 / NCIMB 8545 / WDCM 00012 / Crooks)).